A 365-amino-acid chain; its full sequence is UDP-N-acetylglucosamine--N-acetylmuramyl-(pentapeptide) pyrophosphoryl-undecaprenol N-acetylglucosamine transferase (365 aa).

UDP-N-acetyl-alpha-D-glucosamine contacts are provided by residues threonine 13–glycine 15, asparagine 125, arginine 165, serine 192, and glutamine 293.

It belongs to the glycosyltransferase 28 family. MurG subfamily.

The protein resides in the cell inner membrane. The enzyme catalyses di-trans,octa-cis-undecaprenyl diphospho-N-acetyl-alpha-D-muramoyl-L-alanyl-D-glutamyl-meso-2,6-diaminopimeloyl-D-alanyl-D-alanine + UDP-N-acetyl-alpha-D-glucosamine = di-trans,octa-cis-undecaprenyl diphospho-[N-acetyl-alpha-D-glucosaminyl-(1-&gt;4)]-N-acetyl-alpha-D-muramoyl-L-alanyl-D-glutamyl-meso-2,6-diaminopimeloyl-D-alanyl-D-alanine + UDP + H(+). The protein operates within cell wall biogenesis; peptidoglycan biosynthesis. Functionally, cell wall formation. Catalyzes the transfer of a GlcNAc subunit on undecaprenyl-pyrophosphoryl-MurNAc-pentapeptide (lipid intermediate I) to form undecaprenyl-pyrophosphoryl-MurNAc-(pentapeptide)GlcNAc (lipid intermediate II). In Ruegeria sp. (strain TM1040) (Silicibacter sp.), this protein is UDP-N-acetylglucosamine--N-acetylmuramyl-(pentapeptide) pyrophosphoryl-undecaprenol N-acetylglucosamine transferase.